A 386-amino-acid polypeptide reads, in one-letter code: Putative F-box/kelch-repeat protein At3g17280 (386 aa).

The 48-residue stretch at 1-48 folds into the F-box domain; that stretch reads MTTISDLPYDLLPEILSRLPTKSIPKLKTTCKKWYALFKDPKFVEKKL. Kelch repeat units lie at residues 155–203 and 340–386; these read SYKI…LKES and RIYI…IVEV.

This is Putative F-box/kelch-repeat protein At3g17280 from Arabidopsis thaliana (Mouse-ear cress).